A 101-amino-acid polypeptide reads, in one-letter code: DNA-binding protein Fis (101 aa).

A DNA-binding region (H-T-H motif) is located at residues Gln77–Lys96.

Belongs to the transcriptional regulatory Fis family. As to quaternary structure, homodimer.

In terms of biological role, activates ribosomal RNA transcription. Plays a direct role in upstream activation of rRNA promoters. In Shewanella frigidimarina (strain NCIMB 400), this protein is DNA-binding protein Fis.